We begin with the raw amino-acid sequence, 635 residues long: Sodium- and chloride-dependent creatine transporter 1 (635 aa).

The span at 1-11 (MANKSTENGIY) shows a compositional bias: polar residues. Positions 1–27 (MANKSTENGIYSVSGEEKKGPLIAPGP) are disordered. At 1 to 60 (MANKSTENGIYSVSGEEKKGPLIAPGPDGAPAKGDGPAALGAPGSLLAVPPRETWTRQMD) the chain is on the cytoplasmic side. Residues 61–81 (FIMSCVGFAVGLGNVWRFPYL) traverse the membrane as a helical segment. Over 82–87 (CYKNGG) the chain is Extracellular. A helical membrane pass occupies residues 88–108 (GVFLIPYILIALIGGIPIFFL). Topologically, residues 109-138 (EISLGQFMKAGSINVWNICPLFKGLGYASM) are cytoplasmic. A helical transmembrane segment spans residues 139 to 159 (VIVFYCNTYYIMVLAWGFYYL). Residues 160-230 (VKSFTTTLPW…LSEGLEVPGA (71 aa)) are Extracellular-facing. Asn192 and Asn197 each carry an N-linked (GlcNAc...) asparagine glycan. A helical transmembrane segment spans residues 231 to 251 (LNWEVTLCLLTCWVLVYFCVW). The Cytoplasmic segment spans residues 252 to 269 (KGVKSTGKIVYFTATFPY). The chain crosses the membrane as a helical span at residues 270-290 (VVLVVLLVRGVLLPGALDGII). The Extracellular segment spans residues 291–304 (YYLKPDWSKLASPQ). A helical membrane pass occupies residues 305–325 (VWIDAGTQIFFSYAIGLGALT). The Cytoplasmic segment spans residues 326–341 (ALGSYNRFNNNCYKDA). Residues 342 to 362 (IILALINSGTSFFAGFVVFSI) traverse the membrane as a helical segment. At 363–394 (LGFMATEQGVHISKVAESGPGLAFIAYPRAVT) the chain is on the extracellular side. A helical membrane pass occupies residues 395-415 (LMPVAPLWAALFFFMLLLLGL). Residues 416-444 (DSQFVGVEGFITGLLDLLPASYYFRFQRE) are Cytoplasmic-facing. A helical transmembrane segment spans residues 445 to 465 (ISVALCCTICFVIDLSMVTDG). Residues 466–479 (GMYVFQLFDYYSAS) are Extracellular-facing. A helical transmembrane segment spans residues 480–500 (GTTLLWQAFWECVVVAWVYGA). Residues 501-520 (DRFMDDVACMIGYRPCPWMK) lie on the Cytoplasmic side of the membrane. The helical transmembrane segment at 521 to 541 (WCWSFFTPLVCMGIFIFNVVY) threads the bilayer. Residues 542 to 560 (HEPLVYNNTYVYPWWGEAV) lie on the Extracellular side of the membrane. Asn548 carries N-linked (GlcNAc...) asparagine glycosylation. A helical transmembrane segment spans residues 561 to 581 (GWAFALSSMLCVPLHLLGCLL). Residues 582–635 (RAKGTMAERWQHLTQPIWGLHHLEYRAQDSDVRGLTTLTPVSESSKVVVVESVM) are Cytoplasmic-facing. Residues Thr617 and Thr620 each carry the phosphothreonine modification. Ser623 bears the Phosphoserine mark.

The protein belongs to the sodium:neurotransmitter symporter (SNF) (TC 2.A.22) family. SLC6A8 subfamily. Glycosylated.

The protein localises to the cell membrane. It localises to the apical cell membrane. The catalysed reaction is creatine(out) + chloride(out) + 2 Na(+)(out) = creatine(in) + chloride(in) + 2 Na(+)(in). Its function is as follows. Creatine:sodium symporter which mediates the uptake of creatine. Plays an important role in supplying creatine to the brain via the blood-brain barrier. The protein is Sodium- and chloride-dependent creatine transporter 1 (SLC6A8) of Bos taurus (Bovine).